Here is a 97-residue protein sequence, read N- to C-terminus: DNA-directed RNA polymerase subunit omega (97 aa).

It belongs to the RNA polymerase subunit omega family. In terms of assembly, the RNAP catalytic core consists of 2 alpha, 1 beta, 1 beta' and 1 omega subunit. When a sigma factor is associated with the core the holoenzyme is formed, which can initiate transcription.

It catalyses the reaction RNA(n) + a ribonucleoside 5'-triphosphate = RNA(n+1) + diphosphate. Promotes RNA polymerase assembly. Latches the N- and C-terminal regions of the beta' subunit thereby facilitating its interaction with the beta and alpha subunits. This chain is DNA-directed RNA polymerase subunit omega, found in Corynebacterium glutamicum (strain ATCC 13032 / DSM 20300 / JCM 1318 / BCRC 11384 / CCUG 27702 / LMG 3730 / NBRC 12168 / NCIMB 10025 / NRRL B-2784 / 534).